Reading from the N-terminus, the 405-residue chain is uncharacterized protein (405 aa).

The Cytoplasmic segment spans residues 1–18 (MPEPVAEPALNGLRLNLR). A helical transmembrane segment spans residues 19–39 (IVSIVMFNFASYLTIGLPLAV). Residues 40–46 (LPGYVHD) lie on the Periplasmic side of the membrane. A helical transmembrane segment spans residues 47–67 (VMGFSAFWAGLVISLQYFATL). Topologically, residues 68–84 (LSRPHAGRYADSLGPKK) are cytoplasmic. The helical transmembrane segment at 85–105 (IVVFGLCGCFLSGLGYLTAGL) threads the bilayer. A topological domain (periplasmic) is located at residue threonine 106. Residues 107-127 (ASLPVISLLLLCLGRVILGIG) form a helical membrane-spanning segment. Residues 128–155 (QSFAGTGSTLWGVGVVGSLHIGRVISWN) lie on the Cytoplasmic side of the membrane. The chain crosses the membrane as a helical span at residues 156 to 176 (GIVTYGAMAMGAPLGVVFYHW). Glycine 177 is a topological domain (periplasmic). A helical membrane pass occupies residues 178–198 (GLQALALIIMGVALVAILLAI). The Cytoplasmic segment spans residues 199–223 (PRPTVKASKGKPLPFRAVLGRVWLY). The chain crosses the membrane as a helical span at residues 224-244 (GMALALASAGFGVIATFITLF). Over 245-251 (YDAKGWD) the chain is Periplasmic. A helical membrane pass occupies residues 252–272 (GAAFALTLFSCAFVGTRLLFP). Residues 273–282 (NGINRIGGLN) lie on the Cytoplasmic side of the membrane. A helical membrane pass occupies residues 283–303 (VAMICFSVEIIGLLLVGVATM). The Periplasmic segment spans residues 304 to 308 (PWMAK). A helical membrane pass occupies residues 309-329 (IGVLLAGAGFSLVFPALGVVA). The Cytoplasmic segment spans residues 330–343 (VKAVPQQNQGAALA). A helical transmembrane segment spans residues 344–364 (TYTVFMDLSLGVTGPLAGLVM). Position 365 (serine 365) is a topological domain, periplasmic. The helical transmembrane segment at 366 to 386 (WAGVPVIYLAAAGLVAIALLL) threads the bilayer. Over 387-405 (TWRLKKRPPEHVPEAASSS) the chain is Cytoplasmic.

It belongs to the major facilitator superfamily. YhhS family.

The protein localises to the cell inner membrane. Confers high-level resistance to glyphosate when overexpressed. Overexpression has no effect on intracellular arabinose concentrations. This is an uncharacterized protein from Escherichia coli (strain K12).